Reading from the N-terminus, the 516-residue chain is Putative sel1-like repeat-containing protein R850 (516 aa).

2 Sel1-like repeats span residues 103 to 138 (ALTY…NMNS) and 230 to 265 (SISQ…KQGD).

This is Putative sel1-like repeat-containing protein R850 from Acanthamoeba polyphaga (Amoeba).